The sequence spans 295 residues: Ribosomal protein L11 methyltransferase (295 aa).

The S-adenosyl-L-methionine site is built by T150, G171, D193, and N232.

The protein belongs to the methyltransferase superfamily. PrmA family.

It is found in the cytoplasm. It catalyses the reaction L-lysyl-[protein] + 3 S-adenosyl-L-methionine = N(6),N(6),N(6)-trimethyl-L-lysyl-[protein] + 3 S-adenosyl-L-homocysteine + 3 H(+). In terms of biological role, methylates ribosomal protein L11. The chain is Ribosomal protein L11 methyltransferase from Neisseria meningitidis serogroup C / serotype 2a (strain ATCC 700532 / DSM 15464 / FAM18).